The following is a 361-amino-acid chain: Phosphoribosylformylglycinamidine cyclo-ligase (361 aa).

The protein belongs to the AIR synthase family.

It is found in the cytoplasm. It catalyses the reaction 2-formamido-N(1)-(5-O-phospho-beta-D-ribosyl)acetamidine + ATP = 5-amino-1-(5-phospho-beta-D-ribosyl)imidazole + ADP + phosphate + H(+). It participates in purine metabolism; IMP biosynthesis via de novo pathway; 5-amino-1-(5-phospho-D-ribosyl)imidazole from N(2)-formyl-N(1)-(5-phospho-D-ribosyl)glycinamide: step 2/2. The sequence is that of Phosphoribosylformylglycinamidine cyclo-ligase from Bartonella quintana (strain Toulouse) (Rochalimaea quintana).